A 358-amino-acid chain; its full sequence is MSKSKDPIFFSTGGLDNFISPKMRPLNGTAGEQWEFDGVSDDAKLAFVFGFYRDPNYAILGSGNLRVSVEMAWPNGSRFAQVDYPTDNIIEECDWGTRGIWRSNDFNYTFEITADMKRARVGMHTPQVTGIVSMTSTSQPRYPDGRTYPSENSTSEALPYFHFVEPIPVARAHVDMTILGEKFAWDGLGGMERLWGAFSWFTCLQGMNVIRILAGPYSLSMLSFTSNIKKGREYPSIALFDNGEPVFSSQNTEESDVNDYFSFTKTYDGKVTGTLRDKVTGYELELVSPGRQLHWTFLIDHANLAFEYILGRGTGGSGFSAWVNGGRMGREQFKGIALTEALTFPKKSPLFRPQYSED.

It belongs to the Diels-Alderase family.

It functions in the pathway mycotoxin biosynthesis. Diels-Alderase; part of the gene cluster that mediates the biosynthesis of the mycotoxins phomacins, leucine-derived cytochalasans with potent actin polymerization-inhibitory activities and monocot-specific antigerminative activities. The first step in the pathway is catalyzed by the hybrid PKS-NRPS phmA, assisted by the enoyl reductase phmE, that are responsible for fusion of the leucine precursor and the polyketide backbone to produce a 2-pyrrolidone intermediate. The polyketide synthase module (PKS) of phmA is responsible for the synthesis of the polyketide backbone and the downstream nonribosomal peptide synthetase (NRPS) amidates the carboxyl end of the polyketide with the leucine precursor. Because phmA lacks a designated enoylreductase (ER) domain, the required activity is provided the enoyl reductase phmE. Reduction by the hydrolyase phmG, followed by dehydration and intra-molecular Diels-Alder cyclization by the Diels-Alderase phmD then yield the required isoindolone-fused macrocycle. A number of oxidative steps catalyzed by the tailoring cytochrome P450 monooxygenase phmB, the FAD-linked oxidoreductase phmC and the short-chain dehydrogenase/reductase phmF, are further required to afford the final products, phomacin D and phomacin E. The chain is Diels-Alderase phmD from Phaeosphaeria nodorum (strain SN15 / ATCC MYA-4574 / FGSC 10173) (Glume blotch fungus).